Reading from the N-terminus, the 446-residue chain is Exodeoxyribonuclease 7 large subunit (446 aa).

The protein belongs to the XseA family. As to quaternary structure, heterooligomer composed of large and small subunits.

The protein localises to the cytoplasm. The enzyme catalyses Exonucleolytic cleavage in either 5'- to 3'- or 3'- to 5'-direction to yield nucleoside 5'-phosphates.. Functionally, bidirectionally degrades single-stranded DNA into large acid-insoluble oligonucleotides, which are then degraded further into small acid-soluble oligonucleotides. This is Exodeoxyribonuclease 7 large subunit from Streptococcus pyogenes serotype M3 (strain ATCC BAA-595 / MGAS315).